Consider the following 320-residue polypeptide: Beta-ketoacyl-[acyl-carrier-protein] synthase III (320 aa).

Catalysis depends on residues C114 and H247. Positions 248–252 (QANRR) are ACP-binding. N277 is an active-site residue.

The protein belongs to the thiolase-like superfamily. FabH family. Homodimer.

It localises to the cytoplasm. It carries out the reaction malonyl-[ACP] + acetyl-CoA + H(+) = 3-oxobutanoyl-[ACP] + CO2 + CoA. It participates in lipid metabolism; fatty acid biosynthesis. Its function is as follows. Catalyzes the condensation reaction of fatty acid synthesis by the addition to an acyl acceptor of two carbons from malonyl-ACP. Catalyzes the first condensation reaction which initiates fatty acid synthesis and may therefore play a role in governing the total rate of fatty acid production. Possesses both acetoacetyl-ACP synthase and acetyl transacylase activities. Its substrate specificity determines the biosynthesis of branched-chain and/or straight-chain of fatty acids. This Neisseria meningitidis serogroup C (strain 053442) protein is Beta-ketoacyl-[acyl-carrier-protein] synthase III.